A 438-amino-acid polypeptide reads, in one-letter code: Probable D-serine dehydratase (438 aa).

The residue at position 114 (Lys114) is an N6-(pyridoxal phosphate)lysine.

It belongs to the serine/threonine dehydratase family. DsdA subfamily. It depends on pyridoxal 5'-phosphate as a cofactor.

The catalysed reaction is D-serine = pyruvate + NH4(+). This chain is Probable D-serine dehydratase, found in Histophilus somni (strain 2336) (Haemophilus somnus).